The sequence spans 194 residues: Imidazoleglycerol-phosphate dehydratase (194 aa).

The protein belongs to the imidazoleglycerol-phosphate dehydratase family.

The protein resides in the cytoplasm. The enzyme catalyses D-erythro-1-(imidazol-4-yl)glycerol 3-phosphate = 3-(imidazol-4-yl)-2-oxopropyl phosphate + H2O. The protein operates within amino-acid biosynthesis; L-histidine biosynthesis; L-histidine from 5-phospho-alpha-D-ribose 1-diphosphate: step 6/9. This chain is Imidazoleglycerol-phosphate dehydratase, found in Caldicellulosiruptor saccharolyticus (strain ATCC 43494 / DSM 8903 / Tp8T 6331).